Consider the following 464-residue polypeptide: Chromosomal replication initiator protein DnaA (464 aa).

Residues 1 to 90 (MNNDNTEVLE…KYWQDEDQSI (90 aa)) form a domain I, interacts with DnaA modulators region. A domain II region spans residues 90–126 (ICSVDICVVSNQDPNLLVDIKDRVDRGIKGNCDNVSS). Positions 127–345 (PLDPRFTFDN…GALNKVVAHS (219 aa)) are domain III, AAA+ region. 4 residues coordinate ATP: Gly-173, Gly-175, Lys-176, and Thr-177. A domain IV, binds dsDNA region spans residues 346-464 (SLVGCSITLD…DINLLNRMLR (119 aa)).

This sequence belongs to the DnaA family. As to quaternary structure, oligomerizes as a right-handed, spiral filament on DNA at oriC.

Its subcellular location is the cytoplasm. In terms of biological role, plays an essential role in the initiation and regulation of chromosomal replication. ATP-DnaA binds to the origin of replication (oriC) to initiate formation of the DNA replication initiation complex once per cell cycle. Binds the DnaA box (a 9 base pair repeat at the origin) and separates the double-stranded (ds)DNA. Forms a right-handed helical filament on oriC DNA; dsDNA binds to the exterior of the filament while single-stranded (ss)DNA is stabiized in the filament's interior. The ATP-DnaA-oriC complex binds and stabilizes one strand of the AT-rich DNA unwinding element (DUE), permitting loading of DNA polymerase. After initiation quickly degrades to an ADP-DnaA complex that is not apt for DNA replication. Binds acidic phospholipids. In Ehrlichia ruminantium (strain Gardel), this protein is Chromosomal replication initiator protein DnaA.